A 152-amino-acid polypeptide reads, in one-letter code: Transcriptional regulator MraZ (152 aa).

SpoVT-AbrB domains are found at residues 5–52 (ASAI…PIHE) and 81–124 (AHEV…DEQS).

It belongs to the MraZ family. Forms oligomers.

It is found in the cytoplasm. The protein localises to the nucleoid. This chain is Transcriptional regulator MraZ, found in Shewanella baltica (strain OS155 / ATCC BAA-1091).